The following is a 715-amino-acid chain: Staphylocoagulase (715 aa).

Residues 1-26 (MKKQIISLGALAVASSLFTWDNKADA) form the signal peptide. A compositionally biased stretch (basic and acidic residues) spans 306 to 327 (KYGESETKSPVVKEENKVEDPQ). Disordered regions lie at residues 306 to 348 (KYGE…EETT) and 430 to 470 (QGTE…FNKT). Residues 431–443 (GTESTLKGIQGES) show a composition bias toward polar residues. A run of 8 repeats spans residues 495–521 (ARPR…VSYG), 522–548 (ARPT…VSYG), 549–575 (ARPT…VSYG), 576–602 (ARPT…VSYG), 603–629 (ARPT…VSYG), 630–656 (ARPT…VSYG), 657–683 (ARPT…VSYG), and 684–710 (ARPT…ATYG). Residues 495–710 (ARPRFNKPSE…THADGTATYG (216 aa)) are 8 X 27 AA tandem repeats of A-R-P-[RT]-[FQY]-[NK]-K-[PA]-S-[EK]-T-N-A-Y-N-V-T-T-[NH]-[QAG]-[DN]-G-[TQ]-[VA]-[ST]-Y-G. Residues 674-697 (THGNGQVSYGARPTYNKPSKTNAY) are disordered.

It belongs to the staphylocoagulase family.

Its function is as follows. Staphylocoagulase is an extracellular protein which specifically forms a complex with human prothrombin. This complex named staphylothrombin can clot fibrinogen without any proteolytic cleavage of prothrombin. The polypeptide is Staphylocoagulase (Staphylococcus aureus).